Consider the following 200-residue polypeptide: Inner membrane protein E199L (200 aa).

Residue asparagine 131 is glycosylated (N-linked (GlcNAc...) asparagine; by host). The chain crosses the membrane as a helical span at residues isoleucine 150–isoleucine 170.

The protein belongs to the asfivirus E199L family. As to quaternary structure, interacts with host PYCR2; this interaction results in autophagy activation. In terms of processing, contains intramolecular disulfide bonds.

The protein localises to the virion membrane. Its subcellular location is the host membrane. Functionally, essential for viral fusion with host endosomal membrane and core release. Not required for virus morphogenesis and egress. Induces complete autophagy through the interaction with and down-regulation of host PYCR2. The polypeptide is Inner membrane protein E199L (Ornithodoros (relapsing fever ticks)).